A 678-amino-acid polypeptide reads, in one-letter code: DNA mismatch repair protein MutL (678 aa).

This sequence belongs to the DNA mismatch repair MutL/HexB family.

Functionally, this protein is involved in the repair of mismatches in DNA. It is required for dam-dependent methyl-directed DNA mismatch repair. May act as a 'molecular matchmaker', a protein that promotes the formation of a stable complex between two or more DNA-binding proteins in an ATP-dependent manner without itself being part of a final effector complex. In Lactiplantibacillus plantarum (strain ATCC BAA-793 / NCIMB 8826 / WCFS1) (Lactobacillus plantarum), this protein is DNA mismatch repair protein MutL.